We begin with the raw amino-acid sequence, 135 residues long: MNYFLKAPILGFEHISGVRLEKIDSLFSRLMGQTNSPMALDMVLVNPYCLREYSFVIPKYIELLLELDSHSKVEVYCVVVLQKNLEDSMVNFLAPLVFNSKNGFGAQVALSMMDYPDFGFRDPLKSFVIKERERA.

Belongs to the FliW family. In terms of assembly, interacts with translational regulator CsrA and flagellin(s).

It is found in the cytoplasm. In terms of biological role, acts as an anti-CsrA protein, binds CsrA and prevents it from repressing translation of its target genes, one of which is flagellin. Binds to flagellin and participates in the assembly of the flagellum. The polypeptide is Flagellar assembly factor FliW 2 (Helicobacter acinonychis (strain Sheeba)).